The primary structure comprises 134 residues: MPDPQDRPDSEPSDASTPPAKKLPAKKAAKKAPARKTPAKKAPAKKTPAKGAKSAPPKPAEAPVSLQQRIETNGQLAAAAKDAAAQAKSTVEGANDALARNASVPAPSHSPVPLIVAVTLSLLALLLIRQLRRR.

Residues 1 to 10 (MPDPQDRPDS) are compositionally biased toward basic and acidic residues. Residues 1–68 (MPDPQDRPDS…PAEAPVSLQQ (68 aa)) form a disordered region. Residues 23-48 (LPAKKAAKKAPARKTPAKKAPAKKTP) are compositionally biased toward basic residues. A helical transmembrane segment spans residues 111-128 (PVPLIVAVTLSLLALLLI).

As to quaternary structure, homodimer in solution. Is probably able to self-associate in higher oligomers along the DNA molecules. Interacts with the N-terminal region of Wag31.

It localises to the cell inner membrane. With respect to regulation, can interact directly in vitro with the compound agrimophol, a phloroglucinol from the A.pilosa plant, whose extracts have been used in traditional Chinese medicine to treat pulmonary infections. Interaction with agrimophol leads to disruption of Rv3852's DNA binding function. Its function is as follows. Binds DNA in vitro. It has been proposed that Rv3852 plays a role in nucleoid organization and may function as an anchorage to tether the DNA to the membrane. However, it was later shown that it has no influence on nucleoid shape or compaction. It plays no role in virulence and only a minor role in the control of transcription, and does not appear to function as a typical nucleoid-associated protein. Interacts with Wag31, an important cell shape and cell wall integrity determinant, and facilitates the localization of Wag31 to the cell poles and the cell wall, thus enabling nascent peptidoglycan synthesis. This Mycobacterium tuberculosis (strain ATCC 25618 / H37Rv) protein is Histone-like protein Rv3852.